Here is a 384-residue protein sequence, read N- to C-terminus: 4-hydroxy-3-methylbut-2-en-1-yl diphosphate synthase (flavodoxin) (384 aa).

The [4Fe-4S] cluster site is built by Cys-280, Cys-283, Cys-315, and Glu-322.

This sequence belongs to the IspG family. Requires [4Fe-4S] cluster as cofactor.

It carries out the reaction (2E)-4-hydroxy-3-methylbut-2-enyl diphosphate + oxidized [flavodoxin] + H2O + 2 H(+) = 2-C-methyl-D-erythritol 2,4-cyclic diphosphate + reduced [flavodoxin]. Its pathway is isoprenoid biosynthesis; isopentenyl diphosphate biosynthesis via DXP pathway; isopentenyl diphosphate from 1-deoxy-D-xylulose 5-phosphate: step 5/6. In terms of biological role, converts 2C-methyl-D-erythritol 2,4-cyclodiphosphate (ME-2,4cPP) into 1-hydroxy-2-methyl-2-(E)-butenyl 4-diphosphate. In Parafrankia sp. (strain EAN1pec), this protein is 4-hydroxy-3-methylbut-2-en-1-yl diphosphate synthase (flavodoxin).